Reading from the N-terminus, the 208-residue chain is Histone H1.3 (208 aa).

Ser2 carries the N-acetylserine modification. Residues 37 to 113 enclose the H15 domain; it reads AHPPYINMVT…GASGRFRVTE (77 aa). Positions 113 to 208 are disordered; it reads EKKAAAAKKP…PAKKAVAPKT (96 aa). 2 stretches are compositionally biased toward basic residues: residues 148-158 and 165-191; these read KAKKTTATKTK and KKVKSPKKIAKPTAKKVAKSPAKKSAP. Low complexity predominate over residues 192–208; it reads KKAAAAKPAKKAVAPKT.

The protein belongs to the histone H1/H5 family.

It is found in the nucleus. It localises to the chromosome. Its function is as follows. Histones H1 are necessary for the condensation of nucleosome chains into higher-order structures. The chain is Histone H1.3 (hil-3) from Caenorhabditis elegans.